A 391-amino-acid polypeptide reads, in one-letter code: Formate-dependent phosphoribosylglycinamide formyltransferase (391 aa).

Residues 20-21 (EL) and Glu-80 contribute to the N(1)-(5-phospho-beta-D-ribosyl)glycinamide site. Residues Arg-112, Lys-153, 158–163 (SSGKGQ), 193–196 (EGFI), and Glu-201 contribute to the ATP site. The region spanning 117–306 (RLAAEDLQIP…EFALHVRAFL (190 aa)) is the ATP-grasp domain. The Mg(2+) site is built by Glu-265 and Glu-277. N(1)-(5-phospho-beta-D-ribosyl)glycinamide contacts are provided by residues Asp-284, Lys-354, and 361–362 (RR).

It belongs to the PurK/PurT family. Homodimer.

The enzyme catalyses N(1)-(5-phospho-beta-D-ribosyl)glycinamide + formate + ATP = N(2)-formyl-N(1)-(5-phospho-beta-D-ribosyl)glycinamide + ADP + phosphate + H(+). Its pathway is purine metabolism; IMP biosynthesis via de novo pathway; N(2)-formyl-N(1)-(5-phospho-D-ribosyl)glycinamide from N(1)-(5-phospho-D-ribosyl)glycinamide (formate route): step 1/1. Involved in the de novo purine biosynthesis. Catalyzes the transfer of formate to 5-phospho-ribosyl-glycinamide (GAR), producing 5-phospho-ribosyl-N-formylglycinamide (FGAR). Formate is provided by PurU via hydrolysis of 10-formyl-tetrahydrofolate. This chain is Formate-dependent phosphoribosylglycinamide formyltransferase, found in Photobacterium profundum (strain SS9).